The following is a 762-amino-acid chain: 5-methyltetrahydropteroyltriglutamate--homocysteine methyltransferase (762 aa).

5-methyltetrahydropteroyltri-L-glutamate contacts are provided by residues 17–20 (REWK) and K111. Residues 435-437 (IGS) and E488 contribute to the L-homocysteine site. Residues 435 to 437 (IGS) and E488 each bind L-methionine. Residues 519 to 520 (RC) and W565 each bind 5-methyltetrahydropteroyltri-L-glutamate. D603 is an L-homocysteine binding site. D603 contacts L-methionine. 5-methyltetrahydropteroyltri-L-glutamate is bound at residue E609. Zn(2+) is bound by residues H645, C647, and E669. H698 (proton donor) is an active-site residue. C730 provides a ligand contact to Zn(2+).

The protein belongs to the vitamin-B12 independent methionine synthase family. It depends on Zn(2+) as a cofactor.

It catalyses the reaction 5-methyltetrahydropteroyltri-L-glutamate + L-homocysteine = tetrahydropteroyltri-L-glutamate + L-methionine. It functions in the pathway amino-acid biosynthesis; L-methionine biosynthesis via de novo pathway; L-methionine from L-homocysteine (MetE route): step 1/1. Functionally, catalyzes the transfer of a methyl group from 5-methyltetrahydrofolate to homocysteine resulting in methionine formation. This is 5-methyltetrahydropteroyltriglutamate--homocysteine methyltransferase from Bacillus cereus (strain ATCC 10987 / NRS 248).